The primary structure comprises 160 residues: Small ribosomal subunit protein uS7 (160 aa).

The protein belongs to the universal ribosomal protein uS7 family. Part of the 30S ribosomal subunit. Contacts proteins S9 and S11.

Its function is as follows. One of the primary rRNA binding proteins, it binds directly to 16S rRNA where it nucleates assembly of the head domain of the 30S subunit. Is located at the subunit interface close to the decoding center, probably blocks exit of the E-site tRNA. In Rickettsia conorii (strain ATCC VR-613 / Malish 7), this protein is Small ribosomal subunit protein uS7.